Reading from the N-terminus, the 463-residue chain is Ribosomal protein uS12 methylthiotransferase RimO (463 aa).

An MTTase N-terminal domain is found at 15 to 130 (PKVGMVSLGC…VMQAVHSHLP (116 aa)). Cys24, Cys60, Cys89, Cys161, Cys165, and Cys168 together coordinate [4Fe-4S] cluster. A Radical SAM core domain is found at 147–392 (LTPRHYAYLK…MEVAEEVSAA (246 aa)). Residues 395–463 (ARKIGKTLKV…ADGHDLWGEV (69 aa)) form the TRAM domain.

Belongs to the methylthiotransferase family. RimO subfamily. [4Fe-4S] cluster is required as a cofactor.

It localises to the cytoplasm. The catalysed reaction is L-aspartate(89)-[ribosomal protein uS12]-hydrogen + (sulfur carrier)-SH + AH2 + 2 S-adenosyl-L-methionine = 3-methylsulfanyl-L-aspartate(89)-[ribosomal protein uS12]-hydrogen + (sulfur carrier)-H + 5'-deoxyadenosine + L-methionine + A + S-adenosyl-L-homocysteine + 2 H(+). In terms of biological role, catalyzes the methylthiolation of an aspartic acid residue of ribosomal protein uS12. The sequence is that of Ribosomal protein uS12 methylthiotransferase RimO from Burkholderia mallei (strain NCTC 10229).